We begin with the raw amino-acid sequence, 641 residues long: Acetyl-coenzyme A synthetase (641 aa).

CoA is bound by residues 186-189 (RGGK) and threonine 304. Residues 380-382 (GEP), 404-409 (DTWWQT), aspartate 493, and arginine 508 each bind ATP. Serine 516 contacts CoA. Arginine 519 serves as a coordination point for ATP. Valine 530, histidine 532, and isoleucine 535 together coordinate Mg(2+). N6-acetyllysine is present on lysine 602.

The protein belongs to the ATP-dependent AMP-binding enzyme family. The cofactor is Mg(2+). Post-translationally, acetylated. Deacetylation by the SIR2-homolog deacetylase activates the enzyme.

It carries out the reaction acetate + ATP + CoA = acetyl-CoA + AMP + diphosphate. In terms of biological role, catalyzes the conversion of acetate into acetyl-CoA (AcCoA), an essential intermediate at the junction of anabolic and catabolic pathways. AcsA undergoes a two-step reaction. In the first half reaction, AcsA combines acetate with ATP to form acetyl-adenylate (AcAMP) intermediate. In the second half reaction, it can then transfer the acetyl group from AcAMP to the sulfhydryl group of CoA, forming the product AcCoA. This chain is Acetyl-coenzyme A synthetase, found in Gamma-proteobacterium EBAC31A08.